The primary structure comprises 585 residues: Nucleoporin p58/p45 (585 aa).

Tandem repeats lie at residues 7–8, 30–31, 42–43, 61–62, and 66–67. A 14 X 2 AA repeats of F-G region spans residues 7–565; that stretch reads FGSGTLGSTT…VSNPASAGFG (559 aa). The interval 194–232 is disordered; that stretch reads TSAASSEGLGGIDFSTSSDKKSDKTGTRPEDSKALKDEN. Residues 211 to 232 are compositionally biased toward basic and acidic residues; the sequence is SDKKSDKTGTRPEDSKALKDEN. 2 coiled-coil regions span residues 242-262 and 300-367; these read ENLQKFVKEQKQVQEEISRMS and ETAQ…SHIT. Thr-317 carries the phosphothreonine modification. 9 tandem repeats follow at residues 474–475, 478–479, 499–500, 505–506, 515–516, 517–518, 531–532, 554–555, and 564–565. The segment at 563–585 is disordered; it reads GFGTGGQLLQLKRPPAGNKRGKR.

Belongs to the NUP58 family. Component of the p62 complex, a complex composed of NUP62, NUP54, and isoform p58 and isoform p45 of NUP58. Isoform p58 interacts with NUTF2. Isoform p58 interacts with SRP1-alpha and Importin p97 proteins when they are together, but not with SRP1-alpha protein alone. Post-translationally, O-glycosylated. Expressed in liver.

The protein localises to the nucleus. It localises to the nuclear pore complex. Its subcellular location is the nucleus membrane. In terms of biological role, component of the nuclear pore complex, a complex required for the trafficking across the nuclear membrane. This Rattus norvegicus (Rat) protein is Nucleoporin p58/p45.